We begin with the raw amino-acid sequence, 455 residues long: MAHWPEDVGIIGIEMIFPSLYVDQAELETYDEVSPGKYTMGLGQDKMGVCTDREDINSLCLTAVDKLMERNNIDYNDIGWLEVGTETILDKVKSVKTVLMQLFEESGNTDVEGIDTINACYRGTAALFNALIWIESSSWDGRYAIVVAADIAIYAKECSPTGGAGALLMLIGANAPIVIDRGVRASHMKHAYDFYKPDLMSEYPVVDGKLSVQCYLSALDHCYPRFCSKTEKYLKRCGKENTKIDLDYFDAFVFHSPYCKLVQKSVARLVLNDFIQYPEKYQDLQQLRNLKFEDTYFDRDIEKIFMDKSKQLFEKKTKPSLMLANQVGNMYTTSLYGGLVSLLISEDIGELAGKCICMFSYGSGFAASMFSLHISTDSSPGSTLSRLVTNLTHIKPQVQQRVKLSPGEFENIMEIREQNHHKAPYTPVASPNTLFPGTWYLESIDSMHRRKYKRV.

Glutamate 86 serves as the catalytic Proton donor/acceptor. Cysteine 120 acts as the Acyl-thioester intermediate in catalysis. The (3S)-3-hydroxy-3-methylglutaryl-CoA site is built by cysteine 120, threonine 161, serine 211, histidine 255, lysine 264, asparagine 329, and serine 363. The Proton donor/acceptor role is filled by histidine 255.

Belongs to the thiolase-like superfamily. HMG-CoA synthase family.

The enzyme catalyses acetoacetyl-CoA + acetyl-CoA + H2O = (3S)-3-hydroxy-3-methylglutaryl-CoA + CoA + H(+). It participates in metabolic intermediate biosynthesis; (R)-mevalonate biosynthesis; (R)-mevalonate from acetyl-CoA: step 2/3. This enzyme condenses acetyl-CoA with acetoacetyl-CoA to form HMG-CoA, which is the substrate for HMG-CoA reductase. The protein is Hydroxymethylglutaryl-CoA synthase 2 (HMGCS-2) of Blattella germanica (German cockroach).